The following is a 1677-amino-acid chain: Vitellogenin (1677 aa).

A signal peptide spans 1–8 (LTIALVGS). One can recognise a Vitellogenin domain in the interval 17–655 (FSGSKTYQYK…NAASILPSAV (639 aa)). Disordered regions lie at residues 1089 to 1232 (TLRG…SEEI) and 1252 to 1280 (FQNKRGRMSSSSSSSSSSSSQSTLNSKQD). Residues 1098 to 1122 (SSSSSSSSSSSSSSSSSSSSSSQQS) show a composition bias toward low complexity. A compositionally biased stretch (basic and acidic residues) spans 1123 to 1145 (RMEKRMEQDKLTENLERDRDHMR). Over residues 1169 to 1196 (SSSSSSSSSSSGSNSSSSSSSSSSSSSR) the composition is skewed to low complexity. Residues N1182, N1202, N1217, and N1218 are each glycosylated (N-linked (GlcNAc...) asparagine). A compositionally biased stretch (basic residues) spans 1197 to 1212 (SHNHRNNTRTLSKSKR). Composition is skewed to low complexity over residues 1215 to 1229 (NNNNSSSSSGSSSSS) and 1260 to 1273 (SSSSSSSSSSSSQS). Positions 1490 to 1675 (SKCVAQENKF…TATEAASFCV (186 aa)) constitute a VWFD domain. 2 disulfide bridges follow: C1492-C1631 and C1515-C1674. A compositionally biased stretch (basic and acidic residues) spans 1636 to 1649 (GERRKEFRMPDGRQ). The tract at residues 1636 to 1659 (GERRKEFRMPDGRQARGPSVSPTP) is disordered.

In terms of processing, phosvitin, an egg yolk storage protein, is one of the most highly phosphorylated (10%) proteins in nature. As to expression, found in liver, testis and undifferentiated gonads of estrogen-treated fish. Not detected in the brain and spleen.

Precursor of the major egg-yolk proteins that are sources of nutrients during early development of oviparous organisms. This chain is Vitellogenin, found in Acipenser transmontanus (White sturgeon).